Reading from the N-terminus, the 211-residue chain is Vascular-related unknown protein 1 (211 aa).

A compositionally biased stretch (polar residues) spans 1–12; sequence MMDTFSCNSYEQ. A disordered region spans residues 1-40; it reads MMDTFSCNSYEQNHPHDDDIDIDAHDHDSHGGDHQEESGW. Residues 13-37 show a composition bias toward basic and acidic residues; that stretch reads NHPHDDDIDIDAHDHDSHGGDHQEE.

As to expression, expressed in vascular tissues of cotyledons, rosette leaves, sepals, petals, anther filaments. Expressed in roots, inflorescence stems and developing seeds.

Its subcellular location is the cytoplasm. It localises to the nucleus. In terms of biological role, involved in the regulation of xylem development and growth. May regulate secondary wall formation during vascular development by modulation of brassinosteroid, gibberellin and auxin hormone signaling pathways. The protein is Vascular-related unknown protein 1 of Arabidopsis thaliana (Mouse-ear cress).